The primary structure comprises 260 residues: 5'-nucleotidase SurE (260 aa).

Residues Asp-8, Asp-9, Ser-43, and Asn-96 each coordinate a divalent metal cation.

The protein belongs to the SurE nucleotidase family. The cofactor is a divalent metal cation.

The protein localises to the cytoplasm. It carries out the reaction a ribonucleoside 5'-phosphate + H2O = a ribonucleoside + phosphate. Nucleotidase that shows phosphatase activity on nucleoside 5'-monophosphates. The protein is 5'-nucleotidase SurE of Ruegeria pomeroyi (strain ATCC 700808 / DSM 15171 / DSS-3) (Silicibacter pomeroyi).